A 134-amino-acid polypeptide reads, in one-letter code: Small ribosomal subunit protein uS12 (134 aa).

The disordered stretch occupies residues 1 to 26 (MPTIQQLVRKGRESFADKSKSPALNS). Positions 10–20 (KGRESFADKSK) are enriched in basic and acidic residues. Position 89 is a 3-methylthioaspartic acid (Asp89). Positions 103 to 134 (DTAGVNGRTQRRSKYGAKRPKPGQAPAAKGKK) are disordered. A compositionally biased stretch (basic residues) spans 111–123 (TQRRSKYGAKRPK). A compositionally biased stretch (low complexity) spans 124–134 (PGQAPAAKGKK).

This sequence belongs to the universal ribosomal protein uS12 family. Part of the 30S ribosomal subunit. Contacts proteins S8 and S17. May interact with IF1 in the 30S initiation complex.

With S4 and S5 plays an important role in translational accuracy. Its function is as follows. Interacts with and stabilizes bases of the 16S rRNA that are involved in tRNA selection in the A site and with the mRNA backbone. Located at the interface of the 30S and 50S subunits, it traverses the body of the 30S subunit contacting proteins on the other side and probably holding the rRNA structure together. The combined cluster of proteins S8, S12 and S17 appears to hold together the shoulder and platform of the 30S subunit. The polypeptide is Small ribosomal subunit protein uS12 (Porphyromonas gingivalis (strain ATCC BAA-308 / W83)).